The chain runs to 455 residues: Membrane-bound lytic murein transglycosylase F (455 aa).

An N-terminal signal peptide occupies residues 1–21 (MPKSAVSLFAILLLAASVITA). The interval 22 to 264 (CSPQTRPDAM…HIKEQHFGHV (243 aa)) is non-LT domain. The tract at residues 265–455 (KQFNYVTTSL…LKYLDEQGRL (191 aa)) is LT domain. Glu-309 is an active-site residue.

In the N-terminal section; belongs to the bacterial solute-binding protein 3 family. This sequence in the C-terminal section; belongs to the transglycosylase Slt family.

The protein resides in the cell outer membrane. It carries out the reaction Exolytic cleavage of the (1-&gt;4)-beta-glycosidic linkage between N-acetylmuramic acid (MurNAc) and N-acetylglucosamine (GlcNAc) residues in peptidoglycan, from either the reducing or the non-reducing ends of the peptidoglycan chains, with concomitant formation of a 1,6-anhydrobond in the MurNAc residue.. Functionally, murein-degrading enzyme that degrades murein glycan strands and insoluble, high-molecular weight murein sacculi, with the concomitant formation of a 1,6-anhydromuramoyl product. Lytic transglycosylases (LTs) play an integral role in the metabolism of the peptidoglycan (PG) sacculus. Their lytic action creates space within the PG sacculus to allow for its expansion as well as for the insertion of various structures such as secretion systems and flagella. This is Membrane-bound lytic murein transglycosylase F from Idiomarina loihiensis (strain ATCC BAA-735 / DSM 15497 / L2-TR).